Consider the following 336-residue polypeptide: MYYPFVRKALFQLDPERAHEFTFQQLRRITGTPLEALVRQKVPTKPVTCMGLTFKNPLGLAAGLDKDGECIDALGAMGFGSLEIGTVTPRPQPGNDKPRLFRLVDAEGLINRMGFNNLGVDNLVENVKKAHFDGILGINIGKNKDTPVENGKDDYLICMEKVYAYAGYIAINISSPNTPGLRTLQYGDALDDLLTAIKNKQNDLQVIHHKYVPVAVKIAPDLCEEELIQVADSLLRHNIDGVIATNTTLDRSLVQGMKNCQQTGGLSGRPLQLKSTEIIRRLSLELKGQLPIIGVGGIDSVIAAREKIAAGATLVQIYSGFIFKGPPLIKEIVTHI.

FMN contacts are provided by residues 62 to 66 (AGLDK) and T86. A substrate-binding site is contributed by K66. 111–115 (NRMGF) provides a ligand contact to substrate. 2 residues coordinate FMN: N139 and N172. N172 is a binding site for substrate. Residue S175 is the Nucleophile of the active site. N177 contacts substrate. Residues K217 and T245 each contribute to the FMN site. Position 246-247 (246-247 (NT)) interacts with substrate. FMN-binding positions include G268, G297, and 318-319 (YS).

This sequence belongs to the dihydroorotate dehydrogenase family. Type 2 subfamily. In terms of assembly, monomer. FMN is required as a cofactor.

Its subcellular location is the cell membrane. It catalyses the reaction (S)-dihydroorotate + a quinone = orotate + a quinol. It participates in pyrimidine metabolism; UMP biosynthesis via de novo pathway; orotate from (S)-dihydroorotate (quinone route): step 1/1. Catalyzes the conversion of dihydroorotate to orotate with quinone as electron acceptor. The protein is Dihydroorotate dehydrogenase (quinone) of Salmonella typhi.